The following is a 213-amino-acid chain: Orotate phosphoribosyltransferase (213 aa).

Lys-26 serves as a coordination point for 5-phospho-alpha-D-ribose 1-diphosphate. 34–35 serves as a coordination point for orotate; that stretch reads FF. 5-phospho-alpha-D-ribose 1-diphosphate contacts are provided by residues 72 to 73, Arg-99, Lys-100, Lys-103, His-105, and 124 to 132; these read YK and DDVITAGTA. The orotate site is built by Thr-128 and Arg-156.

Belongs to the purine/pyrimidine phosphoribosyltransferase family. PyrE subfamily. Homodimer. Mg(2+) is required as a cofactor.

The catalysed reaction is orotidine 5'-phosphate + diphosphate = orotate + 5-phospho-alpha-D-ribose 1-diphosphate. It functions in the pathway pyrimidine metabolism; UMP biosynthesis via de novo pathway; UMP from orotate: step 1/2. Catalyzes the transfer of a ribosyl phosphate group from 5-phosphoribose 1-diphosphate to orotate, leading to the formation of orotidine monophosphate (OMP). The polypeptide is Orotate phosphoribosyltransferase (Haemophilus influenzae (strain 86-028NP)).